Consider the following 165-residue polypeptide: MSQQFKYVVRIFGQDVDGTMKLPYALAMVKGIGYNTAKAIIRKLGMDPNARLGELSDAEVKKVESVISDHTIKGLPSWLYNRRKDYESGLDLHLVTSDLIFYVRNDIEREKKSRSWRGVRHSLGLKVRGQRTRTTGRTGMTIGVARKKAAQPQSQQSSSQQQKSS.

The segment at 139–165 is disordered; that stretch reads GMTIGVARKKAAQPQSQQSSSQQQKSS. The segment covering 153–165 has biased composition (low complexity); sequence QSQQSSSQQQKSS.

This sequence belongs to the universal ribosomal protein uS13 family. Part of the 30S ribosomal subunit. Forms a loose heterodimer with protein S19. Forms two bridges to the 50S subunit in the 70S ribosome.

Functionally, located at the top of the head of the 30S subunit, it contacts several helices of the 16S rRNA. In the 70S ribosome it contacts the 23S rRNA (bridge B1a) and protein L5 of the 50S subunit (bridge B1b), connecting the 2 subunits; these bridges are implicated in subunit movement. The chain is Small ribosomal subunit protein uS13 from Saccharolobus solfataricus (strain ATCC 35092 / DSM 1617 / JCM 11322 / P2) (Sulfolobus solfataricus).